A 489-amino-acid polypeptide reads, in one-letter code: Squalene monooxygenase (489 aa).

The chain crosses the membrane as a helical span at residues 10 to 30; that stretch reads VTYDALIVGAGVIGPCVATAL. Residues 21 to 22, 41 to 42, Arg-49, Arg-151, Val-167, Asp-328, and Met-341 contribute to the FAD site; these read VI and ER. Helical transmembrane passes span 426-446 and 464-484; these read FLAGVLPKPLLLTRVFFAVAF and ALLEGIMILITAIKVFTPFLV.

This sequence belongs to the squalene monooxygenase family. FAD is required as a cofactor.

The protein resides in the microsome membrane. It is found in the endoplasmic reticulum membrane. The enzyme catalyses squalene + reduced [NADPH--hemoprotein reductase] + O2 = (S)-2,3-epoxysqualene + oxidized [NADPH--hemoprotein reductase] + H2O + H(+). The protein operates within terpene metabolism; lanosterol biosynthesis; lanosterol from farnesyl diphosphate: step 2/3. Its function is as follows. Catalyzes the stereospecific oxidation of squalene to (S)-2,3-epoxysqualene, and is considered to be a rate-limiting enzyme in steroid biosynthesis. The polypeptide is Squalene monooxygenase (ERG1) (Candida glabrata (strain ATCC 2001 / BCRC 20586 / JCM 3761 / NBRC 0622 / NRRL Y-65 / CBS 138) (Yeast)).